A 160-amino-acid polypeptide reads, in one-letter code: Transcriptional repressor NrdR (160 aa).

A zinc finger lies at 3-34 (CPYCQYEDTQVKDSRPAEEGAVIRRRRVCSVC). Positions 49 to 139 (LLITKKNGRC…VYRDFRNASD (91 aa)) constitute an ATP-cone domain.

It belongs to the NrdR family. The cofactor is Zn(2+).

Negatively regulates transcription of bacterial ribonucleotide reductase nrd genes and operons by binding to NrdR-boxes. In Bartonella tribocorum (strain CIP 105476 / IBS 506), this protein is Transcriptional repressor NrdR.